The following is a 1048-amino-acid chain: Putative truncated guanine nucleotide exchange factor SDC25 (1048 aa).

Disordered regions lie at residues 208-242 (SKQG…VSGS) and 419-444 (LNLD…DEYE). Over residues 212 to 224 (TSCSSETSHHSPS) the composition is skewed to low complexity. An N-terminal Ras-GEF domain is found at 578–710 (SNNRIKGGSK…LLKEVNQKFK (133 aa)). The 248-residue stretch at 748–995 (DPVLFATQLT…YQLSLIIEPK (248 aa)) folds into the Ras-GEF domain. The disordered stretch occupies residues 997–1048 (RKKVVPNSNSNNKSQEKSRDDQTDEGKTSTKKDRFPKFQLHKTKKKAPKVSK). Over residues 1010–1032 (SQEKSRDDQTDEGKTSTKKDRFP) the composition is skewed to basic and acidic residues. Positions 1035–1048 (QLHKTKKKAPKVSK) are enriched in basic residues.

In terms of biological role, promotes the exchange of Ras-bound GDP by GTP. The chain is Putative truncated guanine nucleotide exchange factor SDC25 (SDC25) from Saccharomyces cerevisiae (strain ATCC 204508 / S288c) (Baker's yeast).